A 205-amino-acid polypeptide reads, in one-letter code: Guanylate kinase (205 aa).

The Guanylate kinase-like domain maps to 5-183; that stretch reads GTLYTVSAPS…ALTEFRSIVV (179 aa). 12 to 19 lines the ATP pocket; sequence APSGAGKT.

The protein belongs to the guanylate kinase family.

The protein localises to the cytoplasm. The catalysed reaction is GMP + ATP = GDP + ADP. In terms of biological role, essential for recycling GMP and indirectly, cGMP. This chain is Guanylate kinase, found in Saccharophagus degradans (strain 2-40 / ATCC 43961 / DSM 17024).